The following is a 600-amino-acid chain: Pyranose dehydrogenase (600 aa).

The signal sequence occupies residues 1-25 (MFPRVVRLNSRLVSFALLGLQIANG). Asparagine 99 and asparagine 114 each carry an N-linked (GlcNAc...) asparagine glycan. The residue at position 127 (histidine 127) is a Tele-8alpha-FAD histidine. Residues asparagine 199, asparagine 275, asparagine 342, asparagine 399, and asparagine 507 are each glycosylated (N-linked (GlcNAc...) asparagine). Residue histidine 535 is the Proton acceptor of the active site. Asparagine 546 carries N-linked (GlcNAc...) asparagine glycosylation. Histidine 579 is an active-site residue.

The protein belongs to the GMC oxidoreductase family. Monomer. It depends on FAD as a cofactor. N-glycosylated.

It localises to the secreted. It carries out the reaction pyranose + acceptor = pyranos-2-ulose + reduced acceptor.. The catalysed reaction is pyranose + acceptor = pyranos-3-ulose + reduced acceptor.. It catalyses the reaction pyranose + acceptor = pyranos-2,3-diulose + reduced acceptor.. The enzyme catalyses a pyranoside + acceptor = a pyranosid-3-ulose + reduced acceptor.. It carries out the reaction a pyranoside + acceptor = a pyranosid-3,4-diulose + reduced acceptor.. In terms of biological role, catalyzes the single-oxidation or sequential double oxidation reaction of carbohydrates primarily at carbon-2 and/or carbon-3 with the concomitant reduction of the flavin. The enzyme exhibits a broad sugar substrate specificity, oxidizing different aldopyranoses to the corresponding C-1, C-2, C-3 or C-1,2, C-2,3 and C-3,4 (di)dehydro sugars with substrate-specific regioselectivity. Accepts only a narrow range of electron acceptors such as substituted benzoquinones and complexed metal ions and reacts extremely slowly with O(2) as acceptor. May play a role in the natural recycling of plant matter by oxidizing all major monosaccharides in lignocellulose and by reducing quinone compounds or reactive radical species generated during lignin depolymerization. The chain is Pyranose dehydrogenase from Agaricus xanthodermus (Poison yellow meadow mushroom).